The sequence spans 964 residues: Phosphoenolpyruvate carboxylase (964 aa).

Serine 11 carries the phosphoserine modification. Residues histidine 172 and lysine 600 contribute to the active site.

The protein belongs to the PEPCase type 1 family. In terms of assembly, homotetramer. Requires Mg(2+) as cofactor.

It is found in the cytoplasm. It carries out the reaction oxaloacetate + phosphate = phosphoenolpyruvate + hydrogencarbonate. It participates in photosynthesis; C4 acid pathway. Its activity is regulated as follows. By light-reversible phosphorylation. Through the carboxylation of phosphoenolpyruvate (PEP) it forms oxaloacetate, a four-carbon dicarboxylic acid source for the tricarboxylic acid cycle. This Amaranthus hypochondriacus (Prince-of-Wales feather) protein is Phosphoenolpyruvate carboxylase.